We begin with the raw amino-acid sequence, 604 residues long: MEPPRGPPASGAEPSRAVGTVKVYLPNKQRTVVTVRDGMSVYDSLDKALKVRGLNQDCCVVYRLIKGRKTVTAWDTAIAPLDGEELIVEVLEDVPLTMHNFVRKTFFSLAFCDFCLKFLFHGFRCQTCGYKFHQHCSSKVPTVCVDMSTNRRQFYHSIQDLSGGSRQQEVPSNLSVNELLTPQGPSPFTQQRDQEHFSFPAPANPPLQRIRSTSTPNVHMVSTTAPMDSSLMQFTAQSFSTDAAGRGGDGAPRGSPSPASVSSGRKSPHSKLPAEQRERKSLADEKKKVKNLGYRDSGYYWEVPPSEVQLLKRIGTGSFGTVFRGRWHGDVAVKVLKVAQPTAEQAQAFKNEMQVLRKTRHVNILLFMGFMTRPGFAIITQWCEGSSLYHHLHVADTRFDMVQLIDVARQTAQGMDYLHAKNIIHRDLKSNNIFLHEGLTVKIGDFGLATVKTRWSGAQPLEQPSGSVLWMAAEVIRMQDPNPYSFQSDVYAYGVVLYELMTGSLPYSHIGSRDQIIFMVGRGYLSPDLSKIFSNCPKAMRRLLTDCLKFQREERPLFPQILATIELLQRSLPKIERSASEPSLHRTQADELPACLLSAARLVP.

Residues 19–91 (GTVKVYLPNK…DGEELIVEVL (73 aa)) form the RBD domain. The Phorbol-ester/DAG-type zinc-finger motif lies at 98–144 (MHNFVRKTFFSLAFCDFCLKFLFHGFRCQTCGYKFHQHCSSKVPTVC). Histidine 99, cysteine 112, cysteine 115, cysteine 125, cysteine 128, histidine 133, cysteine 136, and cysteine 144 together coordinate Zn(2+). Serine 157 and serine 162 each carry phosphoserine. Disordered regions lie at residues 178-222 (ELLT…HMVS) and 241-287 (TDAA…DEKK). Residue threonine 181 is modified to Phosphothreonine. At serine 186 the chain carries Phosphoserine. A compositionally biased stretch (polar residues) spans 210 to 222 (IRSTSTPNVHMVS). The span at 252 to 265 (PRGSPSPASVSSGR) shows a compositional bias: low complexity. Phosphoserine occurs at positions 255 and 267. Residues 272–287 (LPAEQRERKSLADEKK) are compositionally biased toward basic and acidic residues. The Protein kinase domain maps to 308-568 (VQLLKRIGTG…PQILATIELL (261 aa)). ATP-binding positions include 314-322 (IGTGSFGTV) and lysine 334. Threonine 316 carries the post-translational modification Phosphothreonine. Catalysis depends on aspartate 427, which acts as the Proton acceptor.

This sequence belongs to the protein kinase superfamily. TKL Ser/Thr protein kinase family. RAF subfamily. In terms of assembly, interacts with TH1L/NELFD. Zn(2+) is required as a cofactor. Post-translationally, dephosphorylation by the SHOC2-MRAS-PP1c (SMP) complex consisting of SHOC2, GTP-bound M-Ras/MRAS and the catalytic subunit of protein phosphatase 1 (PPP1CA, PPP1CB or PPP1CC); this relieves inactivation and stimulates kinase activity.

The catalysed reaction is L-seryl-[protein] + ATP = O-phospho-L-seryl-[protein] + ADP + H(+). It carries out the reaction L-threonyl-[protein] + ATP = O-phospho-L-threonyl-[protein] + ADP + H(+). Its function is as follows. Involved in the transduction of mitogenic signals from the cell membrane to the nucleus. May also regulate the TOR signaling cascade. Phosphorylates PFKFB2. The sequence is that of Serine/threonine-protein kinase A-Raf (Araf) from Rattus norvegicus (Rat).